Reading from the N-terminus, the 391-residue chain is 1-deoxy-D-xylulose 5-phosphate reductoisomerase (391 aa).

T17, G18, S19, I20, N47, and N130 together coordinate NADPH. K131 serves as a coordination point for 1-deoxy-D-xylulose 5-phosphate. Position 132 (E132) interacts with NADPH. Residue D156 participates in Mn(2+) binding. Residues S157, E158, S182, and H205 each coordinate 1-deoxy-D-xylulose 5-phosphate. Residue E158 coordinates Mn(2+). Residue G211 participates in NADPH binding. 1-deoxy-D-xylulose 5-phosphate is bound by residues S218, N223, K224, and E227. Mn(2+) is bound at residue E227.

It belongs to the DXR family. Mg(2+) serves as cofactor. The cofactor is Mn(2+).

The catalysed reaction is 2-C-methyl-D-erythritol 4-phosphate + NADP(+) = 1-deoxy-D-xylulose 5-phosphate + NADPH + H(+). It functions in the pathway isoprenoid biosynthesis; isopentenyl diphosphate biosynthesis via DXP pathway; isopentenyl diphosphate from 1-deoxy-D-xylulose 5-phosphate: step 1/6. Its function is as follows. Catalyzes the NADPH-dependent rearrangement and reduction of 1-deoxy-D-xylulose-5-phosphate (DXP) to 2-C-methyl-D-erythritol 4-phosphate (MEP). This Sinorhizobium fredii (strain NBRC 101917 / NGR234) protein is 1-deoxy-D-xylulose 5-phosphate reductoisomerase.